Consider the following 57-residue polypeptide: uncharacterized protein (57 aa).

Residues 9-45 adopt a coiled-coil conformation; the sequence is NWQEEIRKIIIERVRREAKKRLLEETRKLRMEMKSSK.

This is an uncharacterized protein from Archaeoglobus fulgidus (strain ATCC 49558 / DSM 4304 / JCM 9628 / NBRC 100126 / VC-16).